We begin with the raw amino-acid sequence, 267 residues long: NAD-capped RNA hydrolase NudC (267 aa).

Substrate is bound at residue R70. Residues C99 and C102 each contribute to the Zn(2+) site. E112 is a substrate binding site. 2 residues coordinate Zn(2+): C117 and C122. Y127 contacts substrate. The Nudix hydrolase domain occupies P128–T257. A divalent metal cation is bound by residues A166, E182, and E186. The short motif at G167 to G188 is the Nudix box element. Q200–S207 is a binding site for substrate. Position 227 (E227) interacts with a divalent metal cation. A250 lines the substrate pocket.

The protein belongs to the Nudix hydrolase family. NudC subfamily. Homodimer. It depends on Mg(2+) as a cofactor. Mn(2+) serves as cofactor. The cofactor is Zn(2+).

It catalyses the reaction a 5'-end NAD(+)-phospho-ribonucleoside in mRNA + H2O = a 5'-end phospho-adenosine-phospho-ribonucleoside in mRNA + beta-nicotinamide D-ribonucleotide + 2 H(+). The catalysed reaction is NAD(+) + H2O = beta-nicotinamide D-ribonucleotide + AMP + 2 H(+). The enzyme catalyses NADH + H2O = reduced beta-nicotinamide D-ribonucleotide + AMP + 2 H(+). Functionally, mRNA decapping enzyme that specifically removes the nicotinamide adenine dinucleotide (NAD) cap from a subset of mRNAs by hydrolyzing the diphosphate linkage to produce nicotinamide mononucleotide (NMN) and 5' monophosphate mRNA. The NAD-cap is present at the 5'-end of some mRNAs and stabilizes RNA against 5'-processing. Has preference for mRNAs with a 5'-end purine. Catalyzes the hydrolysis of a broad range of dinucleotide pyrophosphates. In Mannheimia succiniciproducens (strain KCTC 0769BP / MBEL55E), this protein is NAD-capped RNA hydrolase NudC.